We begin with the raw amino-acid sequence, 278 residues long: Pantothenate synthetase (278 aa).

27–34 contacts ATP; the sequence is MGNLHEGH. His-34 serves as the catalytic Proton donor. Gln-58 is a binding site for (R)-pantoate. Gln-58 contributes to the beta-alanine binding site. 147-150 is a binding site for ATP; it reads GEKD. Gln-153 contacts (R)-pantoate. ATP is bound at residue 184 to 187; that stretch reads YSSR.

Belongs to the pantothenate synthetase family. As to quaternary structure, homodimer.

It localises to the cytoplasm. The catalysed reaction is (R)-pantoate + beta-alanine + ATP = (R)-pantothenate + AMP + diphosphate + H(+). Its pathway is cofactor biosynthesis; (R)-pantothenate biosynthesis; (R)-pantothenate from (R)-pantoate and beta-alanine: step 1/1. Its function is as follows. Catalyzes the condensation of pantoate with beta-alanine in an ATP-dependent reaction via a pantoyl-adenylate intermediate. In Acidithiobacillus ferrooxidans (strain ATCC 23270 / DSM 14882 / CIP 104768 / NCIMB 8455) (Ferrobacillus ferrooxidans (strain ATCC 23270)), this protein is Pantothenate synthetase.